A 318-amino-acid polypeptide reads, in one-letter code: NAC domain-containing protein 59 (318 aa).

Positions 24–174 constitute an NAC domain; sequence LPPGFRFHPT…ECVISRVFHT (151 aa). Residues 121–180 mediate DNA binding; that stretch reads VGMKKTLVFYKGRAPKGVKTNWVMHEYRLEGKFAIDNLSKTAKNECVISRVFHTRTDGTK.

As to expression, mostly expressed in root cortex, phloem, atrichoblast and quiescent center (QC), and, to a lower extent, in root endodermis, xylem, pericycle, columella and lateral root cap (LRC). Expressed in roots, cotyledons, very young leaves, senescing leaves, mature flowers and pollen.

It localises to the nucleus. In terms of biological role, transcription activator that binds to DNA in promoters of target genes on a specific bipartite motif 5'-[AG]CGT[AG](4-5n)[AG][CT]ACGCAA-3'. Triggers the expression of senescence-associated genes during age-, salt- and dark-induced senescence through a regulatory network that may involve cross-talk with salt- and H(2)O(2)-dependent signaling pathways. This is NAC domain-containing protein 59 from Arabidopsis thaliana (Mouse-ear cress).